A 118-amino-acid polypeptide reads, in one-letter code: Holo-[acyl-carrier-protein] synthase (118 aa).

Mg(2+)-binding residues include Asp8 and Glu58.

This sequence belongs to the P-Pant transferase superfamily. AcpS family. The cofactor is Mg(2+).

It localises to the cytoplasm. It catalyses the reaction apo-[ACP] + CoA = holo-[ACP] + adenosine 3',5'-bisphosphate + H(+). Transfers the 4'-phosphopantetheine moiety from coenzyme A to a Ser of acyl-carrier-protein. In Listeria welshimeri serovar 6b (strain ATCC 35897 / DSM 20650 / CCUG 15529 / CIP 8149 / NCTC 11857 / SLCC 5334 / V8), this protein is Holo-[acyl-carrier-protein] synthase.